The chain runs to 101 residues: NAD(P)H-quinone oxidoreductase subunit 4L, chloroplastic (101 aa).

Helical transmembrane passes span 2–22, 32–52, and 61–81; these read MLEYVLGLSAYLFSIGIYGLI, MCLELILNAVNLNFVTFSDFF, and ILSIFVISIAAAEAAIGPAIV.

Belongs to the complex I subunit 4L family. As to quaternary structure, NDH is composed of at least 16 different subunits, 5 of which are encoded in the nucleus.

The protein resides in the plastid. Its subcellular location is the chloroplast thylakoid membrane. The catalysed reaction is a plastoquinone + NADH + (n+1) H(+)(in) = a plastoquinol + NAD(+) + n H(+)(out). It catalyses the reaction a plastoquinone + NADPH + (n+1) H(+)(in) = a plastoquinol + NADP(+) + n H(+)(out). Its function is as follows. NDH shuttles electrons from NAD(P)H:plastoquinone, via FMN and iron-sulfur (Fe-S) centers, to quinones in the photosynthetic chain and possibly in a chloroplast respiratory chain. The immediate electron acceptor for the enzyme in this species is believed to be plastoquinone. Couples the redox reaction to proton translocation, and thus conserves the redox energy in a proton gradient. The polypeptide is NAD(P)H-quinone oxidoreductase subunit 4L, chloroplastic (Populus alba (White poplar)).